Here is an 871-residue protein sequence, read N- to C-terminus: Protein TIC 100 (871 aa).

The segment at 1–85 is disordered; that stretch reads MANEELTESQ…NANPETNIRR (85 aa). Polar residues predominate over residues 8–20; that stretch reads ESQQQEDPSQQLP. A compositionally biased stretch (low complexity) spans 30–46; sequence SDSNSDSDASSQSSGDD. MORN repeat units follow at residues 219 to 239, 243 to 257, and 337 to 352; these read YEGT…AENG, YEGE…GHGV, and YAGQ…CGVY. Asparagine 238 carries the post-translational modification Deamidated asparagine. Residues 587–647 adopt a coiled-coil conformation; it reads MLDGLEKWTE…QEEEKKTEMG (61 aa). 2 disordered regions span residues 631–654 and 669–721; these read EELK…EDED and KEKI…NSPF. A compositionally biased stretch (basic and acidic residues) spans 632–645; sequence ELKKKEQEEEKKTE. Threonine 649 carries the phosphothreonine modification. Residues 669–683 are compositionally biased toward basic and acidic residues; sequence KEKIQENKQEEKYKD. The span at 684 to 704 shows a compositional bias: acidic residues; it reads DDDEDDDDGDDDDDDDDDDDL.

In terms of assembly, part of the Tic complex. Component of the 1-MD complex, composed of TIC20-I, TIC214, TIC100 and TIC56. Interacts with the translocating preproteins. Hydrolysis of ATP is essential for the formation of this complex. The 1-MD complex interacts with TIC21. Preferentially expressed in ovules, and moderately expressed in leaves and siliques.

It localises to the plastid. It is found in the chloroplast inner membrane. Functionally, involved in protein precursor import into chloroplasts. May be part of an intermediate translocation complex acting as a protein-conducting channel at the inner envelope. Plays an important role during embryogenesis and chloroplast biogenesis. This chain is Protein TIC 100, found in Arabidopsis thaliana (Mouse-ear cress).